We begin with the raw amino-acid sequence, 358 residues long: MVDILNLTFEELETFLVEKLGEKKFRARQIWQWLWNKYVRDFDQMTNVSKQTRAQLKEHARIFWPEVVTTSKSQDGTTKFLLRLADGALVETVLIPGSQGRITQCLSCQVGCAMGCTFCATGTLGFERNMTMSEILGQVLVAREYLNDVAERPILRNLVFMGMGEPLLNLDEIMRSLHTLNSELGLQFSPRRITVSTCGVNPEGLRRLGESGLAYLAVSLHAPTQELRRTIMPKAARWELNDFIEALQSYPLKTRERITFEYLLLGGVNDSLEHAKQLVRLVSRTKAKLNLIVYNPSGDEADPYAAPTEERILAFEQYLWSKHVTAIIRKSKGADIKAACGQLKAAETGGTPCCAQND.

Glutamate 91 functions as the Proton acceptor in the catalytic mechanism. In terms of domain architecture, Radical SAM core spans 98–335; it reads SQGRITQCLS…AIIRKSKGAD (238 aa). Cysteines 105 and 340 form a disulfide. [4Fe-4S] cluster is bound by residues cysteine 112, cysteine 116, and cysteine 119. S-adenosyl-L-methionine-binding positions include 164 to 165, serine 196, 219 to 221, and asparagine 295; these read GE and SLH. The S-methylcysteine intermediate role is filled by cysteine 340.

Belongs to the radical SAM superfamily. RlmN family. [4Fe-4S] cluster serves as cofactor.

Its subcellular location is the cytoplasm. The catalysed reaction is adenosine(2503) in 23S rRNA + 2 reduced [2Fe-2S]-[ferredoxin] + 2 S-adenosyl-L-methionine = 2-methyladenosine(2503) in 23S rRNA + 5'-deoxyadenosine + L-methionine + 2 oxidized [2Fe-2S]-[ferredoxin] + S-adenosyl-L-homocysteine. It carries out the reaction adenosine(37) in tRNA + 2 reduced [2Fe-2S]-[ferredoxin] + 2 S-adenosyl-L-methionine = 2-methyladenosine(37) in tRNA + 5'-deoxyadenosine + L-methionine + 2 oxidized [2Fe-2S]-[ferredoxin] + S-adenosyl-L-homocysteine. Specifically methylates position 2 of adenine 2503 in 23S rRNA and position 2 of adenine 37 in tRNAs. m2A2503 modification seems to play a crucial role in the proofreading step occurring at the peptidyl transferase center and thus would serve to optimize ribosomal fidelity. This is Dual-specificity RNA methyltransferase RlmN from Oleidesulfovibrio alaskensis (strain ATCC BAA-1058 / DSM 17464 / G20) (Desulfovibrio alaskensis).